The chain runs to 914 residues: UPF0182 protein PTH_1387 (914 aa).

The next 7 membrane-spanning stretches (helical) occupy residues 7–27, 48–68, 109–129, 173–193, 209–229, 252–272, and 281–301; these read FAAY…IAGA, IIIS…VLLF, LLLL…NFTV, INWV…VVYF, YHFS…YQLE, TLLA…AILI, and LVIY…GIYP.

It belongs to the UPF0182 family.

It is found in the cell membrane. This Pelotomaculum thermopropionicum (strain DSM 13744 / JCM 10971 / SI) protein is UPF0182 protein PTH_1387.